We begin with the raw amino-acid sequence, 380 residues long: Succinyl-diaminopimelate desuccinylase (380 aa).

Residue His69 participates in Zn(2+) binding. The active site involves Asp71. Position 102 (Asp102) interacts with Zn(2+). Glu135 functions as the Proton acceptor in the catalytic mechanism. The Zn(2+) site is built by Glu136, Glu164, and His353.

This sequence belongs to the peptidase M20A family. DapE subfamily. In terms of assembly, homodimer. Zn(2+) serves as cofactor. Requires Co(2+) as cofactor.

The enzyme catalyses N-succinyl-(2S,6S)-2,6-diaminopimelate + H2O = (2S,6S)-2,6-diaminopimelate + succinate. The protein operates within amino-acid biosynthesis; L-lysine biosynthesis via DAP pathway; LL-2,6-diaminopimelate from (S)-tetrahydrodipicolinate (succinylase route): step 3/3. Catalyzes the hydrolysis of N-succinyl-L,L-diaminopimelic acid (SDAP), forming succinate and LL-2,6-diaminopimelate (DAP), an intermediate involved in the bacterial biosynthesis of lysine and meso-diaminopimelic acid, an essential component of bacterial cell walls. The protein is Succinyl-diaminopimelate desuccinylase of Ruegeria pomeroyi (strain ATCC 700808 / DSM 15171 / DSS-3) (Silicibacter pomeroyi).